The primary structure comprises 316 residues: Ribonuclease Z (316 aa).

Zn(2+) is bound by residues H59, H61, D63, H64, H135, D203, and H261. Catalysis depends on D63, which acts as the Proton acceptor.

The protein belongs to the RNase Z family. In terms of assembly, homodimer. It depends on Zn(2+) as a cofactor.

The enzyme catalyses Endonucleolytic cleavage of RNA, removing extra 3' nucleotides from tRNA precursor, generating 3' termini of tRNAs. A 3'-hydroxy group is left at the tRNA terminus and a 5'-phosphoryl group is left at the trailer molecule.. Its function is as follows. Zinc phosphodiesterase, which displays some tRNA 3'-processing endonuclease activity. Probably involved in tRNA maturation, by removing a 3'-trailer from precursor tRNA. In Nanoarchaeum equitans (strain Kin4-M), this protein is Ribonuclease Z.